The chain runs to 1040 residues: BEM1-interacting protein 2 (1040 aa).

A disordered region spans residues 1-39 (MSNDREVPTLSQLNTTVSRDKDVSDTLSPDFDSKGSATG). Residues 8–17 (PTLSQLNTTV) are compositionally biased toward polar residues. Ser-18, Ser-24, and Ser-28 each carry phosphoserine. In terms of domain architecture, SH3 spans 43-107 (GNFPMYIAIN…PVVFTQKITV (65 aa)). Positions 266-330 (WSPEEITAYF…FKEIEKIKEA (65 aa)) constitute an SAM domain. Disordered stretches follow at residues 365–412 (YRGH…SQEA), 437–478 (VSPR…WQSP), and 491–744 (IDQY…ARPV). Over residues 372–397 (TSQSLEDLPSQQNFIPTPRNTRNSSA) the composition is skewed to polar residues. Positions 444-457 (KPPSYPSPAQPPKS) are enriched in pro residues. Phosphoserine is present on Ser-450. A compositionally biased stretch (polar residues) spans 459-478 (LLNNTRTSPSPAQLYSWQSP). The span at 495–505 (SSSDSNFNSRS) shows a compositional bias: low complexity. Ser-519, Ser-523, and Ser-546 each carry phosphoserine. A compositionally biased stretch (basic and acidic residues) spans 557 to 570 (SSDRKSSCSSHEEE). The span at 573–598 (QETMNTFERPTSSIYADGSTIASISN) shows a compositional bias: polar residues. Residues 600–609 (KLAHEKEGKK) show a composition bias toward basic and acidic residues. Over residues 632-648 (LKRSSSASRTSSFKKSS) the composition is skewed to low complexity. Ser-652 bears the Phosphoserine mark. Over residues 654–684 (FRQQFTDNAARSSSPEENPITSMPSEKNSSP) the composition is skewed to polar residues. The segment covering 690–701 (SSKKSRSKRRSV) has biased composition (basic residues). A compositionally biased stretch (basic and acidic residues) spans 702–732 (SAKEAEIFTETVKDDKNKRSASEAIKGETLK). The PH domain occupies 768 to 887 (DADFSGWMSK…WMAALIKTTI (120 aa)). Residues 943 to 957 (QLQQQQHDNNQGQAD) are compositionally biased toward low complexity. Disordered regions lie at residues 943–986 (QLQQ…NNTT) and 1007–1040 (VARNSSMRGTEKKGKFSTEEDYFGDNSKHKTDKI). The segment covering 973–986 (TISTPNLSSANNTT) has biased composition (polar residues). A compositionally biased stretch (basic and acidic residues) spans 1015-1024 (GTEKKGKFST).

Interacts with BEM1. Interacts with TOS7.

It is found in the bud. The protein localises to the bud neck. In terms of biological role, protein involved in bud formation. Functions redundantly with BOI1 to promote the fusion of secretory vesicles with the plasma membrane at sites of polarized growth. Acts as an abscission inhibitor during cytokinesis in response to chromatin bridges. This chain is BEM1-interacting protein 2, found in Saccharomyces cerevisiae (strain ATCC 204508 / S288c) (Baker's yeast).